Here is a 403-residue protein sequence, read N- to C-terminus: Serine/threonine transporter SstT (403 aa).

A run of 8 helical transmembrane segments spans residues 11 to 31, 51 to 71, 81 to 101, 138 to 158, 175 to 195, 213 to 233, 285 to 305, and 319 to 339; these read GNLV…AFIS, AIAP…KEVG, VMYV…SFIF, ALAN…GIPL, AVSY…FGLV, LLGV…PILV, VAIP…VTVL, and FMTA…ASGV.

Belongs to the dicarboxylate/amino acid:cation symporter (DAACS) (TC 2.A.23) family.

The protein localises to the cell inner membrane. The catalysed reaction is L-serine(in) + Na(+)(in) = L-serine(out) + Na(+)(out). The enzyme catalyses L-threonine(in) + Na(+)(in) = L-threonine(out) + Na(+)(out). Its function is as follows. Involved in the import of serine and threonine into the cell, with the concomitant import of sodium (symport system). The polypeptide is Serine/threonine transporter SstT (Haemophilus ducreyi (strain 35000HP / ATCC 700724)).